Here is a 171-residue protein sequence, read N- to C-terminus: Peptide methionine sulfoxide reductase MsrA (171 aa).

The active site involves cysteine 13.

It belongs to the MsrA Met sulfoxide reductase family.

The enzyme catalyses L-methionyl-[protein] + [thioredoxin]-disulfide + H2O = L-methionyl-(S)-S-oxide-[protein] + [thioredoxin]-dithiol. It carries out the reaction [thioredoxin]-disulfide + L-methionine + H2O = L-methionine (S)-S-oxide + [thioredoxin]-dithiol. Its function is as follows. Has an important function as a repair enzyme for proteins that have been inactivated by oxidation. Catalyzes the reversible oxidation-reduction of methionine sulfoxide in proteins to methionine. In Mycolicibacterium paratuberculosis (strain ATCC BAA-968 / K-10) (Mycobacterium paratuberculosis), this protein is Peptide methionine sulfoxide reductase MsrA.